Consider the following 390-residue polypeptide: Bifunctional enzyme IspD/IspF (390 aa).

The 2-C-methyl-D-erythritol 4-phosphate cytidylyltransferase stretch occupies residues 1–229 (MAAGRGERAG…RQDHAVFPDI (229 aa)). Positions 230 to 390 (RTGNGYDVHS…TVIYPGEVPE (161 aa)) are 2-C-methyl-D-erythritol 2,4-cyclodiphosphate synthase. Residues D236 and H238 each contribute to the a divalent metal cation site. 4-CDP-2-C-methyl-D-erythritol 2-phosphate-binding positions include 236–238 (DVH) and 262–263 (HS). Position 270 (H270) interacts with a divalent metal cation. 4-CDP-2-C-methyl-D-erythritol 2-phosphate is bound by residues 284-286 (DIG), 360-363 (TTNE), F367, and R370.

In the N-terminal section; belongs to the IspD/TarI cytidylyltransferase family. IspD subfamily. This sequence in the C-terminal section; belongs to the IspF family. The cofactor is a divalent metal cation.

The catalysed reaction is 2-C-methyl-D-erythritol 4-phosphate + CTP + H(+) = 4-CDP-2-C-methyl-D-erythritol + diphosphate. The enzyme catalyses 4-CDP-2-C-methyl-D-erythritol 2-phosphate = 2-C-methyl-D-erythritol 2,4-cyclic diphosphate + CMP. The protein operates within isoprenoid biosynthesis; isopentenyl diphosphate biosynthesis via DXP pathway; isopentenyl diphosphate from 1-deoxy-D-xylulose 5-phosphate: step 2/6. Its pathway is isoprenoid biosynthesis; isopentenyl diphosphate biosynthesis via DXP pathway; isopentenyl diphosphate from 1-deoxy-D-xylulose 5-phosphate: step 4/6. Functionally, bifunctional enzyme that catalyzes the formation of 4-diphosphocytidyl-2-C-methyl-D-erythritol from CTP and 2-C-methyl-D-erythritol 4-phosphate (MEP) (IspD), and catalyzes the conversion of 4-diphosphocytidyl-2-C-methyl-D-erythritol 2-phosphate (CDP-ME2P) to 2-C-methyl-D-erythritol 2,4-cyclodiphosphate (ME-CPP) with a corresponding release of cytidine 5-monophosphate (CMP) (IspF). The polypeptide is Bifunctional enzyme IspD/IspF (Brucella suis biovar 1 (strain 1330)).